Here is a 182-residue protein sequence, read N- to C-terminus: Large ribosomal subunit protein uL10 (182 aa).

This sequence belongs to the universal ribosomal protein uL10 family. Part of the ribosomal stalk of the 50S ribosomal subunit. The N-terminus interacts with L11 and the large rRNA to form the base of the stalk. The C-terminus forms an elongated spine to which L12 dimers bind in a sequential fashion forming a multimeric L10(L12)X complex.

In terms of biological role, forms part of the ribosomal stalk, playing a central role in the interaction of the ribosome with GTP-bound translation factors. The protein is Large ribosomal subunit protein uL10 of Janthinobacterium sp. (strain Marseille) (Minibacterium massiliensis).